The sequence spans 273 residues: 2,3,4,5-tetrahydropyridine-2,6-dicarboxylate N-succinyltransferase (273 aa).

Substrate is bound by residues Arg104 and Asp141.

The protein belongs to the transferase hexapeptide repeat family. In terms of assembly, homotrimer.

The protein localises to the cytoplasm. It carries out the reaction (S)-2,3,4,5-tetrahydrodipicolinate + succinyl-CoA + H2O = (S)-2-succinylamino-6-oxoheptanedioate + CoA. It functions in the pathway amino-acid biosynthesis; L-lysine biosynthesis via DAP pathway; LL-2,6-diaminopimelate from (S)-tetrahydrodipicolinate (succinylase route): step 1/3. This chain is 2,3,4,5-tetrahydropyridine-2,6-dicarboxylate N-succinyltransferase, found in Blochmanniella pennsylvanica (strain BPEN).